We begin with the raw amino-acid sequence, 296 residues long: 4-diphosphocytidyl-2-C-methyl-D-erythritol kinase (296 aa).

The active site involves K22. 105-115 (PMGGGLGGGSS) provides a ligand contact to ATP. Residue D147 is part of the active site.

This sequence belongs to the GHMP kinase family. IspE subfamily.

The catalysed reaction is 4-CDP-2-C-methyl-D-erythritol + ATP = 4-CDP-2-C-methyl-D-erythritol 2-phosphate + ADP + H(+). It participates in isoprenoid biosynthesis; isopentenyl diphosphate biosynthesis via DXP pathway; isopentenyl diphosphate from 1-deoxy-D-xylulose 5-phosphate: step 3/6. In terms of biological role, catalyzes the phosphorylation of the position 2 hydroxy group of 4-diphosphocytidyl-2C-methyl-D-erythritol. The chain is 4-diphosphocytidyl-2-C-methyl-D-erythritol kinase from Photobacterium profundum (strain SS9).